The primary structure comprises 214 residues: Octanoyltransferase (214 aa).

The 176-residue stretch at 32–207 (EDTLDEIWLV…NLLALLNHPP (176 aa)) folds into the BPL/LPL catalytic domain. Residues 71–78 (RGGQVTYH), 138–140 (SLG), and 151–153 (GLA) each bind substrate. The active-site Acyl-thioester intermediate is the Cys169.

Belongs to the LipB family.

Its subcellular location is the cytoplasm. The enzyme catalyses octanoyl-[ACP] + L-lysyl-[protein] = N(6)-octanoyl-L-lysyl-[protein] + holo-[ACP] + H(+). It participates in protein modification; protein lipoylation via endogenous pathway; protein N(6)-(lipoyl)lysine from octanoyl-[acyl-carrier-protein]: step 1/2. Functionally, catalyzes the transfer of endogenously produced octanoic acid from octanoyl-acyl-carrier-protein onto the lipoyl domains of lipoate-dependent enzymes. Lipoyl-ACP can also act as a substrate although octanoyl-ACP is likely to be the physiological substrate. The chain is Octanoyltransferase from Klebsiella pneumoniae subsp. pneumoniae (strain ATCC 700721 / MGH 78578).